Here is a 33-residue protein sequence, read N- to C-terminus: Cytochrome b6-f complex subunit 5 (33 aa).

A helical membrane pass occupies residues 5 to 25 (LLFGIILGLISCVLAGLFVSA).

This sequence belongs to the PetG family. The 4 large subunits of the cytochrome b6-f complex are cytochrome b6, subunit IV (17 kDa polypeptide, PetD), cytochrome f and the Rieske protein, while the 4 small subunits are PetG, PetL, PetM and PetN. The complex functions as a dimer.

The protein localises to the plastid. Its subcellular location is the chloroplast thylakoid membrane. In terms of biological role, component of the cytochrome b6-f complex, which mediates electron transfer between photosystem II (PSII) and photosystem I (PSI), cyclic electron flow around PSI, and state transitions. PetG is required for either the stability or assembly of the cytochrome b6-f complex. The protein is Cytochrome b6-f complex subunit 5 of Bigelowiella natans (Pedinomonas minutissima).